The primary structure comprises 418 residues: Tryptophan synthase beta chain (418 aa).

The segment covering 1–17 (MTSTLPNASTPDPSSLQ) has biased composition (polar residues). Residues 1-23 (MTSTLPNASTPDPSSLQPAVRPG) form a disordered region. Lysine 111 carries the N6-(pyridoxal phosphate)lysine modification.

Belongs to the TrpB family. In terms of assembly, tetramer of two alpha and two beta chains. It depends on pyridoxal 5'-phosphate as a cofactor.

The enzyme catalyses (1S,2R)-1-C-(indol-3-yl)glycerol 3-phosphate + L-serine = D-glyceraldehyde 3-phosphate + L-tryptophan + H2O. It functions in the pathway amino-acid biosynthesis; L-tryptophan biosynthesis; L-tryptophan from chorismate: step 5/5. In terms of biological role, the beta subunit is responsible for the synthesis of L-tryptophan from indole and L-serine. In Synechococcus sp. (strain CC9605), this protein is Tryptophan synthase beta chain.